A 156-amino-acid chain; its full sequence is Flagellar assembly factor FliW (156 aa).

Belongs to the FliW family. Interacts with translational regulator CsrA and flagellin(s).

Its subcellular location is the cytoplasm. In terms of biological role, acts as an anti-CsrA protein, binds CsrA and prevents it from repressing translation of its target genes, one of which is flagellin. Binds to flagellin and participates in the assembly of the flagellum. The protein is Flagellar assembly factor FliW of Syntrophomonas wolfei subsp. wolfei (strain DSM 2245B / Goettingen).